The following is a 357-amino-acid chain: MLSVQTTRAAKLQLGQLPSIAYTARSGRLHHQFYSTVAEKTANPTPNTSDKTNIFDIRTKVYDETDIRKHDDNQFITHPLFPHPTFSQEDCLKVGYEHRPPRTFGDKMAFRGIELVRGSFDFVTGYKKPKTQADIDSGFKGTRYEMTEGKWLTRCIFLESIAGVPGAVASFIRHLHSLRLLKRDKAWIETLLDEAFNERMHLLTFIKIGKPSWFTRTIIYVGQGVFCNLFFLFYLANPKYCHRFVGYLEEEAVSTYTHFVHELQSGKLPKFENIKIPTIAWQYWPELTENSSMLDLILRIRADEAKHREVNHTLANLDQRKDRNPFGLAIPDLKEPQPESGLKVTKPHGWEKEELKL.

A helical membrane pass occupies residues 152–172; that stretch reads LTRCIFLESIAGVPGAVASFI. Fe cation-binding residues include Glu-159, Glu-198, and His-201. A helical membrane pass occupies residues 218 to 238; that stretch reads IIYVGQGVFCNLFFLFYLANP. Glu-249, Glu-304, and His-307 together coordinate Fe cation. Residues 330 to 357 form a disordered region; sequence IPDLKEPQPESGLKVTKPHGWEKEELKL. Positions 348 to 357 are enriched in basic and acidic residues; sequence HGWEKEELKL.

This sequence belongs to the alternative oxidase family. It depends on Fe cation as a cofactor.

The protein localises to the mitochondrion inner membrane. Its function is as follows. Catalyzes cyanide-resistant oxygen consumption. May increase respiration when the cytochrome respiratory pathway is restricted, or in response to low temperatures. In Scheffersomyces stipitis (strain ATCC 58785 / CBS 6054 / NBRC 10063 / NRRL Y-11545) (Yeast), this protein is Alternative oxidase, mitochondrial (STO1).